The sequence spans 266 residues: Enterotoxin type C-3 (266 aa).

The signal sequence occupies residues 1–27; the sequence is MYKRLFISRVILIFALILVISTPNVLA. 2 residues coordinate Zn(2+): Asp-36 and Asp-110. Cys-120 and Cys-137 are joined by a disulfide. Zn(2+)-binding residues include His-145 and His-149.

Belongs to the staphylococcal/streptococcal toxin family. In terms of assembly, interacts with MHC class II molecules composed of alpha/HLA-DRA and beta/HLA-DRB1 chains. Interacts with host T-cell receptor/TCR beta variable chain TRBV8-2.

It localises to the secreted. Its function is as follows. Staphylococcal enterotoxin that activates the host immune system by binding as unprocessed molecules to major histocompatibility (MHC) complex class II and T-cell receptor (TCR) molecules. In turn, this ternary complex activates a large number of T-lymphocytes initiating a systemic release of pro-inflammatory cytokines. Also causes the intoxication staphylococcal food poisoning syndrome. This chain is Enterotoxin type C-3 (entC3), found in Staphylococcus aureus.